The chain runs to 175 residues: Cytochrome c homolog (175 aa).

The Cytoplasmic segment spans residues 1 to 8 (MTGKELNK). Residues 9–29 (IVAAILFASLIAMIVGFIANI) traverse the membrane as a helical; Signal-anchor segment. The Periplasmic portion of the chain corresponds to 30-175 (LYKPNLHVLH…LFLKNYVHDQ (146 aa)). Positions 84, 87, 88, and 150 each coordinate heme c.

Belongs to the cytochrome c family. Binds 1 heme c group covalently per subunit.

It is found in the cell membrane. Its function is as follows. May be involved in electron transfer from bc1 complex to aa3. The chain is Cytochrome c homolog (cycM) from Rickettsia prowazekii (strain Madrid E).